The chain runs to 1407 residues: ABC transporter B family member 6 (1407 aa).

Positions 18-65 are disordered; it reads LTPVSEVSEPPESPSPYLDPGAEHGGTGTAAQADDEEEMEEPEEMEPP. Positions 50 to 63 are enriched in acidic residues; sequence ADDEEEMEEPEEME. Helical transmembrane passes span 84–104, 139–159, 212–231, and 236–258; these read VLMVFGSVAAAAHGTALIVYL, IVYIAGGVFISGWIEVSCWIL, VGNYIHNMATFISGLIIGFV, and IALITLATGPFIVAAGGISNIFL. One can recognise an ABC transmembrane type-1 1 domain in the interval 86–379; it reads MVFGSVAAAA…AATNFYSFDQ (294 aa). Residue Asn-291 is glycosylated (N-linked (GlcNAc...) asparagine). 2 helical membrane passes run 310–330 and 351–371; these read GILISLVQGLGLGFTYGLAIC and GEIITALFAVILSGLGLNQAA. The ABC transporter 1 domain maps to 412–647; sequence IEFRNVYFSY…GNLYAELLKC (236 aa). An ATP-binding site is contributed by 447 to 454; sequence GRNGSGKS. N-linked (GlcNAc...) asparagine glycosylation is found at Asn-449 and Asn-663. 2 disordered regions span residues 670-696 and 709-815; these read AERDSSAGRGFQEPSSPKMAKSPSLQR and NSEE…DGQH. N-linked (GlcNAc...) asparagine glycosylation occurs at Asn-727. Residues 733–755 show a composition bias toward basic and acidic residues; the sequence is VGEKEPTIKRQDSFEMRLPELPK. The segment covering 761-770 has biased composition (polar residues); that stretch reads PQRQKSNGSD. N-linked (GlcNAc...) asparagine glycosylation is present at Asn-767. One can recognise an ABC transmembrane type-1 2 domain in the interval 835–1123; sequence AVLGSIGAAI…PFGLAPYILK (289 aa). Helical transmembrane passes span 840-860, 880-900, 958-978, 982-1002, 1061-1081, and 1102-1122; these read IGAAIFGSFNPLLAYVIALVV, LIIACMGIVTVVANFLQHFYF, IFIQDSFAVIVAILIGLLLGW, LVALATLPVLTLSAIAQKLWL, IGFAFGFSQFLLFACNALLLW, and MVFSFATFALVEPFGLAPYIL. In terms of domain architecture, ABC transporter 2 spans 1158 to 1395; the sequence is IELKNIDFCY…NGLYVRLMQP (238 aa). N-linked (GlcNAc...) asparagine glycosylation is present at Asn-1178. Residue 1193–1200 coordinates ATP; sequence GVSGSGKS. Residues Asn-1260 and Asn-1346 are each glycosylated (N-linked (GlcNAc...) asparagine).

It belongs to the ABC transporter superfamily. ABCB family. Multidrug resistance exporter (TC 3.A.1.201) subfamily. In terms of tissue distribution, expressed in aerial tissues.

It is found in the membrane. The catalysed reaction is (indol-3-yl)acetate(in) + ATP + H2O = (indol-3-yl)acetate(out) + ADP + phosphate + H(+). In terms of biological role, probable auxin efflux transporter that contributes, together with ABCB20 and in a FKBP42/TWD1-dependent manner, to the regulation of leaf position and morphology, internode distribution, roots development, and inflorescence organization, probably by modulating auxin repartition. This is ABC transporter B family member 6 from Arabidopsis thaliana (Mouse-ear cress).